The chain runs to 883 residues: Envelope glycoprotein B (883 aa).

The signal sequence occupies residues 1-31 (MQSYIAVNIDMASLKMLICVCVAILIPSTLS). The Virion surface portion of the chain corresponds to 32 to 750 (QDSHGIAGII…SGIASFLSNP (719 aa)). Intrachain disulfides connect Cys77/Cys535, Cys94/Cys491, Cys167/Cys229, Cys321/Cys369, and Cys558/Cys608. N-linked (GlcNAc...) asparagine; by host glycans are attached at residues Asn102 and Asn121. The interval 134 to 140 (TWALFSR) is involved in fusion and/or binding to host membrane. N-linked (GlcNAc...) asparagine; by host glycosylation occurs at Asn211. Residues 216-223 (HQTLGYRT) are involved in fusion and/or binding to host membrane. 2 N-linked (GlcNAc...) asparagine; by host glycosylation sites follow: Asn262 and Asn360. The segment at 428–457 (QNHLPRGRERRQAAGRRTASLQSGPQGDRI) is disordered. N-linked (GlcNAc...) asparagine; by host glycans are attached at residues Asn579, Asn635, and Asn649. Hydrophobic membrane proximal region stretches follow at residues 694–748 (IDTV…SFLS) and 724–744 (ALGT…SGIA). The chain crosses the membrane as a helical span at residues 751–771 (FAALGIGIAVVVSIILGLLAF). The Intravirion portion of the chain corresponds to 772 to 883 (KYVMNLKSNP…PSWAEESEDE (112 aa)). The disordered stretch occupies residues 791–817 (PPAGTPPRPSRRYYKDEEEVEEDSDED). Acidic residues predominate over residues 806-817 (DEEEVEEDSDED). Positions 868-871 (YPLL) match the Internalization motif motif.

This sequence belongs to the herpesviridae glycoprotein B family. Homotrimer; disulfide-linked. Binds to heparan sulfate proteoglycans. Interacts with gH/gL heterodimer. Post-translationally, a proteolytic cleavage by host furin generates two subunits that remain linked by disulfide bonds.

The protein resides in the virion membrane. It is found in the host cell membrane. Its subcellular location is the host endosome membrane. It localises to the host Golgi apparatus membrane. Envelope glycoprotein that forms spikes at the surface of virion envelope. Essential for the initial attachment to heparan sulfate moieties of the host cell surface proteoglycans. Involved in fusion of viral and cellular membranes leading to virus entry into the host cell. Following initial binding to its host receptors, membrane fusion is mediated by the fusion machinery composed at least of gB and the heterodimer gH/gL. May be involved in the fusion between the virion envelope and the outer nuclear membrane during virion egress. The protein is Envelope glycoprotein B of Gallus gallus (Chicken).